The following is a 499-amino-acid chain: Probable alginate O-acetylase AlgI (499 aa).

Transmembrane regions (helical) follow at residues 7 to 25 (VFLFLFLPLFLGLYYLSPA), 40 to 62 (YAWWRIDFLGLFAAVTVFNYWIG), 78 to 100 (WLTLGVVVDLCVLGYFKYANFGV), 115 to 137 (FVVTHILLPIGISFYVFESISYI), 150 to 172 (NLVDFAAFVAIFPHLIAGPVLRF), 239 to 261 (LYFDFSGYSDMAIGLGLMIGFRF), 312 to 334 (ILTMLLGGLWHGANWTFIIWGAW), 354 to 373 (IRPLRWVFAFLLVMVGWVIF), 380 to 397 (VAWRMYAAMFSFGDWTLS), 407 to 429 (LQIATLLLAYVVIAVYGIRQFYA), and 475 to 497 (VLLLFAASVLKLSAQSFSPFLYF). Residue H322 is part of the active site.

Belongs to the membrane-bound acyltransferase family.

The protein localises to the cell inner membrane. It participates in glycan biosynthesis; alginate biosynthesis. Its function is as follows. Together with AlgJ and AlgF, forms an inner membrane complex which probably interacts with the alginate polymerization-transport complex and adds acetyl groups at the O-2 and O-3 positions of mannuronate residues. Acetylation of alginate increases cyst resistance to desiccation. The polypeptide is Probable alginate O-acetylase AlgI (algI) (Azotobacter vinelandii).